Here is a 250-residue protein sequence, read N- to C-terminus: 2,3-bisphosphoglycerate-dependent phosphoglycerate mutase (250 aa).

Substrate contacts are provided by residues 8–15 (RHGESTWN), 21–22 (TG), Arg-60, 87–90 (ERHY), Lys-98, and 114–115 (RR). His-9 (tele-phosphohistidine intermediate) is an active-site residue. The active-site Proton donor/acceptor is Glu-87. Residues 116 to 135 (SYDTPPPPLAANDPRSERSD) form a disordered region. 183–184 (GN) is a binding site for substrate.

The protein belongs to the phosphoglycerate mutase family. BPG-dependent PGAM subfamily. Homodimer.

It catalyses the reaction (2R)-2-phosphoglycerate = (2R)-3-phosphoglycerate. It participates in carbohydrate degradation; glycolysis; pyruvate from D-glyceraldehyde 3-phosphate: step 3/5. Catalyzes the interconversion of 2-phosphoglycerate and 3-phosphoglycerate. This chain is 2,3-bisphosphoglycerate-dependent phosphoglycerate mutase, found in Polaromonas naphthalenivorans (strain CJ2).